A 551-amino-acid polypeptide reads, in one-letter code: Solute carrier family 22 member 4 (551 aa).

Residues 1–20 (MRDYDEAIAFLGEWGPFQRL) lie on the Cytoplasmic side of the membrane. Residues 21-41 (IFFLLSASIIPNGFNGMSVVF) form a helical membrane-spanning segment. Topologically, residues 42 to 141 (LAGTPEHRCR…WNLVCEDNWK (100 aa)) are extracellular. N-linked (GlcNAc...) asparagine glycans are attached at residues asparagine 57, asparagine 64, and asparagine 91. A helical transmembrane segment spans residues 142 to 162 (VPLTTSLFFVGVLLGSFVSGQ). The Cytoplasmic segment spans residues 163–171 (LSDRFGRKN). The chain crosses the membrane as a helical span at residues 172-192 (VLFATMAVQTGFSFLQIFSIS). At 193–197 (WEMFT) the chain is on the extracellular side. A helical transmembrane segment spans residues 198–218 (VLFLIVGMGQISNYVVAFILG). 218–225 (GTEILGKS) is an ATP binding site. At 219–232 (TEILGKSVRIIFST) the chain is on the cytoplasmic side. Residues 233–253 (LGVCTFFAVGYMLLPLFAYFI) traverse the membrane as a helical segment. The Extracellular segment spans residues 254-257 (RDWR). The helical transmembrane segment at 258–278 (MLLLALTVPGVLCVPLWWFIP) threads the bilayer. Topologically, residues 279 to 337 (ESPRWLISQRRFREAEDIIQKAAKMNNIAVPAVIFDSVEELNPLKQQKAFILDLFRTWN) are cytoplasmic. The chain crosses the membrane as a helical span at residues 338–358 (IAIMTIMSLLLWMLTSVGYFA). The Extracellular portion of the chain corresponds to 359–371 (LSLDTPNLHGDAY). Residues 372-392 (LNCFLSALIEIPAYITAWLLL) form a helical membrane-spanning segment. Topologically, residues 393–399 (RTLPRRY) are cytoplasmic. The chain crosses the membrane as a helical span at residues 400–420 (IIAAVLFWGGGVLLFIQLVPV). Residues 421–426 (DYYFLS) lie on the Extracellular side of the membrane. Residues 427 to 447 (IGLVMLGKFGITSAFSMLYVF) traverse the membrane as a helical segment. Over 448 to 460 (TAELYPTMVRNMA) the chain is Cytoplasmic. The chain crosses the membrane as a helical span at residues 461–481 (VGVTSMASRVGSIIAPYFVYL). Residues 482 to 486 (GAYNR) lie on the Extracellular side of the membrane. The helical transmembrane segment at 487 to 507 (MLPYIVMGSLTVLIGILTLFF) threads the bilayer. At 508–551 (PESLGMTLPETLEQMQKVKWFRSGKKTRDSMETEENPKVLITAF) the chain is on the cytoplasmic side.

Belongs to the major facilitator (TC 2.A.1) superfamily. Organic cation transporter (TC 2.A.1.19) family. Interacts with PDZK1.

It localises to the apical cell membrane. It is found in the basal cell membrane. The protein localises to the mitochondrion membrane. It catalyses the reaction ergothioneine(out) + Na(+)(out) = ergothioneine(in) + Na(+)(in). The enzyme catalyses acetylcholine(in) = acetylcholine(out). The catalysed reaction is (R)-carnitine(out) + Na(+)(out) = (R)-carnitine(in) + Na(+)(in). It carries out the reaction glycine betaine(out) + Na(+)(out) = glycine betaine(in) + Na(+)(in). Its activity is regulated as follows. Allosterically activated by intracellular ATP. Transporter that mediates the transport of endogenous and microbial zwitterions and organic cations. Functions as a Na(+)-dependent and pH-dependent high affinity microbial symporter of potent food-derived antioxidant ergothioeine. Transports one sodium ion with one ergothioeine molecule. Involved in the absorption of ergothioneine from the luminal/apical side of the small intestine and renal tubular cells, and into non-parenchymal liver cells, thereby contributing to maintain steady-state ergothioneine level in the body. Also mediates the bidirectional transport of acetycholine, although the exact transport mechanism has not been fully identified yet. Most likely exports anti-inflammatory acetylcholine in non-neuronal tissues, thereby contributing to the non-neuronal cholinergic system. Displays a general physiological role linked to better survival by controlling inflammation and oxidative stress, which may be related to ergothioneine and acetycholine transports. May also function as a low-affinity Na(+)-dependent transporter of L-carnitine through the mitochondrial membrane, thereby maintaining intracellular carnitine homeostasis. May contribute to regulate the transport of cationic compounds in testis across the blood-testis-barrier. This Papio anubis (Olive baboon) protein is Solute carrier family 22 member 4 (SLC22A4).